The chain runs to 670 residues: MNASSWSLRNLPWFRATLAQWRYALRNTIAMCLALTVAYYLNLDEPYWAMTSAAVVSFPTVGGVISKSLGRIAGSLLGAIAALLLAGHTLNEPWFFLLSMSAWLGFCTWACAHFTNNVAYAFQLAGYTAAIIAFPMVNITEASQLWDIAQARVCEVIVGILCGGMMMMILPSSSDATALLTALKNMHARLLEHASLLWQPETTDAIRAAHEGVIGQILTMNLLRIQAFWSHYRFRQQNARLNALLHQQLRMTSVISSLRRMLLNWPSPPGATREILEQLLTALASSQTDVYTVARIIAPLRPTNVADYRHVAFWQRLRYFCRLYLQSSQELHRLQSDVDDHARLPRTSGLARHTDNAEAMWSGLRTFCTLMMIGAWSIASQWDAGANALTLAAISCVLYSAVAAPFKSLSLLMRTLVLLSLFSFVVKFGLMVQISDLWQFLLFLFPLLATMQLLKLQMPKFAALWGQLIVFMGSFIAVTNPPVYNFADFLNDNLAKIVGVALAWLAFAILRPGSDARKSRRHIRALRRDFVDQLSRHPTLSESEFESLTYHHVSQLSNSQDALARRWLLRWGIVLLNCSHVVWQLRDWESRSDPLSRVRDNCISLLRGVMSERGVQQKSLAATLEELQRICDSLARHHQPAARELAAIVWRLYCSLSQLEQAPPQGTLAS.

Transmembrane regions (helical) follow at residues 23–42 (YALRNTIAMCLALTVAYYLN), 47–69 (YWAMTSAAVVSFPTVGGVISKSL), 76–98 (LLGAIAALLLAGHTLNEPWFFLL), 118–140 (VAYAFQLAGYTAAIIAFPMVNIT), 153–170 (VCEVIVGILCGGMMMMIL), 381–403 (QWDAGANALTLAAISCVLYSAVA), 410–432 (SLLMRTLVLLSLFSFVVKFGLMV), 437–454 (LWQFLLFLFPLLATMQLL), 461–483 (FAALWGQLIVFMGSFIAVTNPPV), and 493–510 (NLAKIVGVALAWLAFAIL).

This sequence belongs to the aromatic acid exporter ArAE (TC 2.A.85) family.

Its subcellular location is the cell membrane. This is an uncharacterized protein from Escherichia coli O157:H7.